Consider the following 226-residue polypeptide: 3-dehydroquinate dehydratase (226 aa).

3-dehydroquinate is bound by residues S21, 42-44, and R70; that span reads EVR. The active-site Proton donor/acceptor is the H124. K149 acts as the Schiff-base intermediate with substrate in catalysis. 3-dehydroquinate-binding residues include R187, T206, and Q210.

It belongs to the type-I 3-dehydroquinase family. In terms of assembly, homodimer.

It carries out the reaction 3-dehydroquinate = 3-dehydroshikimate + H2O. It participates in metabolic intermediate biosynthesis; chorismate biosynthesis; chorismate from D-erythrose 4-phosphate and phosphoenolpyruvate: step 3/7. In terms of biological role, involved in the third step of the chorismate pathway, which leads to the biosynthesis of aromatic amino acids. Catalyzes the cis-dehydration of 3-dehydroquinate (DHQ) and introduces the first double bond of the aromatic ring to yield 3-dehydroshikimate. This is 3-dehydroquinate dehydratase from Methanothrix thermoacetophila (strain DSM 6194 / JCM 14653 / NBRC 101360 / PT) (Methanosaeta thermophila).